The primary structure comprises 542 residues: Retron Ec83 probable ATPase (542 aa).

Positions Gly92 to Ser99 match the ATP-binding motif.

Probable ATPase component of antiviral defense system retron Ec83, composed of a non-coding RNA (ncRNA), a reverse transcriptase (RT), this protein and a putative HNH endonuclease. Expression of retron Ec83 confers protection against bacteriophage T2, T4 and T6. At multiplicity of infection (MOI) of 0.02 cultures slow growth when infected with T4 but do not collapse, at MOI 2 cultures enter growth stasis. The protein is Retron Ec83 probable ATPase of Escherichia coli.